The chain runs to 337 residues: Sorting nexin-15 (337 aa).

The 130-residue stretch at 1-130 folds into the PX domain; that stretch reads MSRQAKDDFL…EFFRGGEVTR (130 aa). Residues Arg51, Ser53, Arg87, and Arg96 each coordinate a 1,2-diacyl-sn-glycero-3-phospho-(1D-myo-inositol-3-phosphate). An Omega-N-methylarginine modification is found at Arg105. The disordered stretch occupies residues 133–156; it reads EVSRDLRILPPPLIPTPPPDEARL. Positions 141–151 are enriched in pro residues; that stretch reads LPPPLIPTPPP. Phosphoserine occurs at positions 201 and 227. Positions 244–270 are disordered; sequence LDQEPWEPGGQEEEEAEDGEPAPAYLG. Acidic residues predominate over residues 253-263; the sequence is GQEEEEAEDGE. The MIT domain occupies 265 to 337; it reads APAYLGQATE…RAEMLHTHLP (73 aa).

The protein belongs to the sorting nexin family. Homodimer. Interacts with SNX1, SNX2 and SNX4.

It localises to the cytoplasm. The protein resides in the membrane. It is found in the cytoplasmic vesicle membrane. May be involved in several stages of intracellular trafficking. Overexpression of SNX15 disrupts the normal trafficking of proteins from the plasma membrane to recycling endosomes or the TGN. This is Sorting nexin-15 (Snx15) from Mus musculus (Mouse).